A 186-amino-acid chain; its full sequence is UPF0301 protein LHK_02881 (186 aa).

It belongs to the UPF0301 (AlgH) family.

The sequence is that of UPF0301 protein LHK_02881 from Laribacter hongkongensis (strain HLHK9).